The primary structure comprises 556 residues: Zinc finger protein 18 (556 aa).

In terms of domain architecture, SCAN box spans 41-123; that stretch reads RQLFRQFRYQ…TLVESLKGDP (83 aa). The disordered stretch occupies residues 169-195; that stretch reads QDLPLQNTSSAPGELLSHGVKEESDLE. The KRAB domain maps to 218-291; that stretch reads EVGTALLPSL…HLHSAEKMAR (74 aa). 5 C2H2-type zinc fingers span residues 415 to 437, 443 to 465, 471 to 493, 499 to 521, and 527 to 549; these read PTCR…QRTH, FHCR…QRTH, CKCD…EKIH, YKCP…QRVH, and YKCT…QRSH.

It belongs to the krueppel C2H2-type zinc-finger protein family.

The protein localises to the nucleus. Functionally, may be involved in transcriptional regulation. This Rattus norvegicus (Rat) protein is Zinc finger protein 18 (Znf18).